The following is a 367-amino-acid chain: Putative 12-oxophytodienoate reductase 11 (367 aa).

FMN-binding positions include Pro26–Thr28, Ala59, and Gln101. His178–His181 provides a ligand contact to substrate. Tyr183 serves as the catalytic Proton donor. Residue Arg230 participates in FMN binding. A substrate-binding site is contributed by Arg270. Residues Gly300 and Gly321–Arg322 each bind FMN.

The protein belongs to the NADH:flavin oxidoreductase/NADH oxidase family. FMN serves as cofactor.

Putative oxophytodienoate reductase that may be involved in the biosynthesis or metabolism of oxylipin signaling molecules. The protein is Putative 12-oxophytodienoate reductase 11 (OPR11) of Oryza sativa subsp. japonica (Rice).